The chain runs to 404 residues: Phospho-N-acetylmuramoyl-pentapeptide-transferase (404 aa).

10 consecutive transmembrane segments (helical) span residues 30–50 (SAAILSLCISIFLGKRLIIFF), 73–93 (IPTMGGIIIIAATVVPTLLFA), 100–120 (IMLLLISIIWMGLIGFIDDYI), 132–152 (GKFKIVGQVALGVIVGITLIF), 209–229 (YMWIVYVLFMIFIIAAVSNGA), 242–262 (TSAIIGTTLAILAYVSGNVIF), 274–294 (LAELAIFCTAFVGACVGFLWY), 301–321 (IFMGDTGSLAIGSVIAVLAIV), 326–346 (LMIPLLCGIFFIETLSVIIQV), and 381–401 (KIVTRFWIVGIVLAILSLVTL).

It belongs to the glycosyltransferase 4 family. MraY subfamily. It depends on Mg(2+) as a cofactor.

It is found in the cell inner membrane. It carries out the reaction UDP-N-acetyl-alpha-D-muramoyl-L-alanyl-gamma-D-glutamyl-meso-2,6-diaminopimeloyl-D-alanyl-D-alanine + di-trans,octa-cis-undecaprenyl phosphate = di-trans,octa-cis-undecaprenyl diphospho-N-acetyl-alpha-D-muramoyl-L-alanyl-D-glutamyl-meso-2,6-diaminopimeloyl-D-alanyl-D-alanine + UMP. It participates in cell wall biogenesis; peptidoglycan biosynthesis. Functionally, catalyzes the initial step of the lipid cycle reactions in the biosynthesis of the cell wall peptidoglycan: transfers peptidoglycan precursor phospho-MurNAc-pentapeptide from UDP-MurNAc-pentapeptide onto the lipid carrier undecaprenyl phosphate, yielding undecaprenyl-pyrophosphoryl-MurNAc-pentapeptide, known as lipid I. This is Phospho-N-acetylmuramoyl-pentapeptide-transferase from Amoebophilus asiaticus (strain 5a2).